The primary structure comprises 282 residues: Nucleotide-binding protein Shew_3314 (282 aa).

8–15 (GRSGSGKS) contacts ATP. 56–59 (DVRN) contributes to the GTP binding site.

This sequence belongs to the RapZ-like family.

Displays ATPase and GTPase activities. The protein is Nucleotide-binding protein Shew_3314 of Shewanella loihica (strain ATCC BAA-1088 / PV-4).